The sequence spans 132 residues: Holo-[acyl-carrier-protein] synthase (132 aa).

Residues Asp-8 and Glu-62 each contribute to the Mg(2+) site.

It belongs to the P-Pant transferase superfamily. AcpS family. Mg(2+) is required as a cofactor.

It is found in the cytoplasm. The enzyme catalyses apo-[ACP] + CoA = holo-[ACP] + adenosine 3',5'-bisphosphate + H(+). Transfers the 4'-phosphopantetheine moiety from coenzyme A to a Ser of acyl-carrier-protein. The protein is Holo-[acyl-carrier-protein] synthase of Polaromonas sp. (strain JS666 / ATCC BAA-500).